The following is a 361-amino-acid chain: tRNA-specific 2-thiouridylase MnmA (361 aa).

ATP is bound by residues 8–15 (AMSGGVDS) and Met35. Residues 95–97 (NPD) are interaction with target base in tRNA. The active-site Nucleophile is Cys100. A disulfide bridge connects residues Cys100 and Cys196. Gly124 lines the ATP pocket. Positions 146–148 (KDQ) are interaction with tRNA. Residue Cys196 is the Cysteine persulfide intermediate of the active site. Residues 303-304 (RY) form an interaction with tRNA region.

The protein belongs to the MnmA/TRMU family.

It localises to the cytoplasm. It carries out the reaction S-sulfanyl-L-cysteinyl-[protein] + uridine(34) in tRNA + AH2 + ATP = 2-thiouridine(34) in tRNA + L-cysteinyl-[protein] + A + AMP + diphosphate + H(+). Its function is as follows. Catalyzes the 2-thiolation of uridine at the wobble position (U34) of tRNA, leading to the formation of s(2)U34. The chain is tRNA-specific 2-thiouridylase MnmA from Chlamydia pneumoniae (Chlamydophila pneumoniae).